The chain runs to 50 residues: Insulin (50 aa).

Disulfide bonds link Cys-7/Cys-36, Cys-19/Cys-49, and Cys-35/Cys-40.

It belongs to the insulin family. As to quaternary structure, heterodimer of a B chain and an A chain linked by two disulfide bonds.

Its subcellular location is the secreted. Insulin decreases blood glucose concentration. It increases cell permeability to monosaccharides, amino acids and fatty acids. It accelerates glycolysis, the pentose phosphate cycle, and glycogen synthesis in liver. The protein is Insulin (ins) of Myoxocephalus scorpius (Shorthorn sculpin).